The primary structure comprises 122 residues: Biogenesis of lysosome-related organelles complex 1 subunit BLS1 (122 aa).

Ser-33 bears the Phosphoserine mark.

This sequence belongs to the BLOC1S1 family. As to quaternary structure, component of the biogenesis of lysosome-related organelles complex-1 (BLOC-1) composed of at least BLI1, BLS1, CNL1, KXD1, SNN1 and VAB2.

The protein localises to the endosome. Component of the biogenesis of lysosome-related organelles complex-1 (BLOC-1), a complex involved in endosomal cargo sorting. The polypeptide is Biogenesis of lysosome-related organelles complex 1 subunit BLS1 (BLS1) (Saccharomyces cerevisiae (strain RM11-1a) (Baker's yeast)).